The sequence spans 111 residues: Small ribosomal subunit protein uS10 (111 aa).

Belongs to the universal ribosomal protein uS10 family. As to quaternary structure, part of the 30S ribosomal subunit.

Involved in the binding of tRNA to the ribosomes. In Protochlamydia amoebophila (strain UWE25), this protein is Small ribosomal subunit protein uS10.